Reading from the N-terminus, the 406-residue chain is Imidazolonepropionase (406 aa).

Fe(3+) contacts are provided by histidine 72 and histidine 74. Histidine 72 and histidine 74 together coordinate Zn(2+). Residues arginine 81, tyrosine 144, and histidine 177 each contribute to the 4-imidazolone-5-propanoate site. Tyrosine 144 provides a ligand contact to N-formimidoyl-L-glutamate. Fe(3+) is bound at residue histidine 242. Zn(2+) is bound at residue histidine 242. Residue glutamine 245 participates in 4-imidazolone-5-propanoate binding. Aspartate 317 contributes to the Fe(3+) binding site. Position 317 (aspartate 317) interacts with Zn(2+). Residues asparagine 319 and glycine 321 each contribute to the N-formimidoyl-L-glutamate site. Residue threonine 322 coordinates 4-imidazolone-5-propanoate.

It belongs to the metallo-dependent hydrolases superfamily. HutI family. It depends on Zn(2+) as a cofactor. Requires Fe(3+) as cofactor.

Its subcellular location is the cytoplasm. The catalysed reaction is 4-imidazolone-5-propanoate + H2O = N-formimidoyl-L-glutamate. Its pathway is amino-acid degradation; L-histidine degradation into L-glutamate; N-formimidoyl-L-glutamate from L-histidine: step 3/3. In terms of biological role, catalyzes the hydrolytic cleavage of the carbon-nitrogen bond in imidazolone-5-propanoate to yield N-formimidoyl-L-glutamate. It is the third step in the universal histidine degradation pathway. The polypeptide is Imidazolonepropionase (Yersinia pseudotuberculosis serotype O:1b (strain IP 31758)).